Consider the following 206-residue polypeptide: 3-isopropylmalate dehydratase small subunit (206 aa).

Belongs to the LeuD family. LeuD type 1 subfamily. Heterodimer of LeuC and LeuD.

It carries out the reaction (2R,3S)-3-isopropylmalate = (2S)-2-isopropylmalate. Its pathway is amino-acid biosynthesis; L-leucine biosynthesis; L-leucine from 3-methyl-2-oxobutanoate: step 2/4. Its function is as follows. Catalyzes the isomerization between 2-isopropylmalate and 3-isopropylmalate, via the formation of 2-isopropylmaleate. The polypeptide is 3-isopropylmalate dehydratase small subunit (Leptospira borgpetersenii serovar Hardjo-bovis (strain L550)).